Consider the following 566-residue polypeptide: Glucose-6-phosphate isomerase (566 aa).

Catalysis depends on E374, which acts as the Proton donor. Catalysis depends on residues H405 and K529.

This sequence belongs to the GPI family.

It localises to the cytoplasm. The enzyme catalyses alpha-D-glucose 6-phosphate = beta-D-fructose 6-phosphate. The protein operates within carbohydrate biosynthesis; gluconeogenesis. It functions in the pathway carbohydrate degradation; glycolysis; D-glyceraldehyde 3-phosphate and glycerone phosphate from D-glucose: step 2/4. In terms of biological role, catalyzes the reversible isomerization of glucose-6-phosphate to fructose-6-phosphate. The polypeptide is Glucose-6-phosphate isomerase (Bifidobacterium longum (strain NCC 2705)).